A 138-amino-acid chain; its full sequence is MSDGLVPGEVIPGEGTVTLNEGRERTEVTVGNTGDRPSQVGSHFHFFEANAALEFDREAAMGMRLNIPAGTAVRFEPGDEQTVELVEIGGKRRAHGMNGLVNGSVDGETGDAVERMRAAGFGDTGEAAPDDGDTESDQ.

A disordered region spans residues 115 to 138 (RMRAAGFGDTGEAAPDDGDTESDQ). Over residues 128–138 (APDDGDTESDQ) the composition is skewed to acidic residues.

Belongs to the urease beta subunit family. Heterotrimer of UreA (gamma), UreB (beta) and UreC (alpha) subunits. Three heterotrimers associate to form the active enzyme.

The protein localises to the cytoplasm. The enzyme catalyses urea + 2 H2O + H(+) = hydrogencarbonate + 2 NH4(+). It participates in nitrogen metabolism; urea degradation; CO(2) and NH(3) from urea (urease route): step 1/1. This chain is Urease subunit beta, found in Haloarcula marismortui (strain ATCC 43049 / DSM 3752 / JCM 8966 / VKM B-1809) (Halobacterium marismortui).